Reading from the N-terminus, the 399-residue chain is S-adenosylmethionine synthase (399 aa).

H17 is an ATP binding site. Residue D19 participates in Mg(2+) binding. K(+) is bound at residue E52. Residues E65 and Q109 each contribute to the L-methionine site. The tract at residues 109 to 119 (QSADIAQGVDA) is flexible loop. Residues 177 to 179 (DSK), 243 to 244 (KF), D252, 258 to 259 (RK), A275, and K279 contribute to the ATP site. D252 contributes to the L-methionine binding site. K283 lines the L-methionine pocket.

This sequence belongs to the AdoMet synthase family. In terms of assembly, homotetramer; dimer of dimers. Mg(2+) serves as cofactor. It depends on K(+) as a cofactor.

It is found in the cytoplasm. The enzyme catalyses L-methionine + ATP + H2O = S-adenosyl-L-methionine + phosphate + diphosphate. The protein operates within amino-acid biosynthesis; S-adenosyl-L-methionine biosynthesis; S-adenosyl-L-methionine from L-methionine: step 1/1. Functionally, catalyzes the formation of S-adenosylmethionine (AdoMet) from methionine and ATP. The overall synthetic reaction is composed of two sequential steps, AdoMet formation and the subsequent tripolyphosphate hydrolysis which occurs prior to release of AdoMet from the enzyme. The polypeptide is S-adenosylmethionine synthase (Bradyrhizobium sp. (strain ORS 278)).